The following is a 608-amino-acid chain: ATP-citrate synthase beta chain protein 1 (608 aa).

ATP contacts are provided by residues 214-234 and 265-291; these read ILRF…ELGG and FKSE…KNQA. Glu-231 contributes to the Mg(2+) binding site. His-273 (tele-phosphohistidine intermediate) is an active-site residue. CoA is bound at residue 292-302; sequence LQDAGATVPTS.

It belongs to the succinate/malate CoA ligase alpha subunit family. Heterooctamer of 4 alpha and 4 beta chains.

It is found in the cytoplasm. Its subcellular location is the cytosol. The enzyme catalyses oxaloacetate + acetyl-CoA + ADP + phosphate = citrate + ATP + CoA. Functionally, ATP citrate-lyase is the primary enzyme responsible for the synthesis of cytosolic acetyl-CoA, used for the elongation of fatty acids and biosynthesis of isoprenoids, flavonoids and malonated derivatives. May supply substrate to the cytosolic acetyl-CoA carboxylase, which generates the malonyl-CoA used for the synthesis of a multitude of compounds, including very long chain fatty acids and flavonoids. Required for normal growth and development and elongation of C18 fatty acids to C20 to C24 fatty acids in seeds. In contrast to all known animal ACL enzymes having a homomeric structure, plant ACLs are composed of alpha and beta chains. In Arabidopsis thaliana (Mouse-ear cress), this protein is ATP-citrate synthase beta chain protein 1 (ACLB-1).